A 265-amino-acid chain; its full sequence is uncharacterized protein (265 aa).

The signal sequence occupies residues 1–22 (MGYFKRVLLYIIVMVLSVFIIG). Cysteine 23 carries the N-palmitoyl cysteine lipid modification. Cysteine 23 is lipidated: S-diacylglycerol cysteine.

This sequence belongs to the staphylococcal tandem lipoprotein family.

It localises to the cell membrane. This is an uncharacterized protein from Staphylococcus aureus (strain MSSA476).